Reading from the N-terminus, the 504-residue chain is Protein psiD (504 aa).

The first 21 residues, 1–21 (MKYSYLLLILLLSNLYKEGFS), serve as a signal peptide directing secretion. N-linked (GlcNAc...) asparagine glycosylation is found at N87, N136, N236, N252, N290, and N373. Residues 111–251 (LTRVGDSTYA…YDACGVCDGH (141 aa)) form the PA14 domain. Residues 417–430 (TVTPTVTPTVTPTP) are compositionally biased toward low complexity. A disordered region spans residues 417–453 (TVTPTVTPTVTPTPTTTPTPSPTTVPPRPTPTPLPAD). Residues 431–453 (TTTPTPSPTTVPPRPTPTPLPAD) show a composition bias toward pro residues. A glycan (N-linked (GlcNAc...) asparagine) is linked at N483.

Belongs to the prespore-cell-inducing factor family.

The protein localises to the secreted. This is Protein psiD (psiD) from Dictyostelium discoideum (Social amoeba).